The sequence spans 397 residues: 1-deoxy-D-xylulose 5-phosphate reductoisomerase (397 aa).

Positions 10, 11, 12, 13, 39, and 125 each coordinate NADPH. K126 is a 1-deoxy-D-xylulose 5-phosphate binding site. Position 127 (E127) interacts with NADPH. D151 contacts Mn(2+). Residues S152, E153, S187, and H210 each coordinate 1-deoxy-D-xylulose 5-phosphate. E153 is a binding site for Mn(2+). G216 is an NADPH binding site. The 1-deoxy-D-xylulose 5-phosphate site is built by S223, N228, K229, and E232. Mn(2+) is bound at residue E232.

This sequence belongs to the DXR family. As to quaternary structure, homodimer. The cofactor is Mg(2+). Mn(2+) is required as a cofactor.

It carries out the reaction 2-C-methyl-D-erythritol 4-phosphate + NADP(+) = 1-deoxy-D-xylulose 5-phosphate + NADPH + H(+). It functions in the pathway isoprenoid biosynthesis; isopentenyl diphosphate biosynthesis via DXP pathway; isopentenyl diphosphate from 1-deoxy-D-xylulose 5-phosphate: step 1/6. In terms of biological role, catalyzes the NADPH-dependent rearrangement and reduction of 1-deoxy-D-xylulose-5-phosphate (DXP) to 2-C-methyl-D-erythritol 4-phosphate (MEP). The chain is 1-deoxy-D-xylulose 5-phosphate reductoisomerase from Wigglesworthia glossinidia brevipalpis.